A 610-amino-acid chain; its full sequence is UvrABC system protein C (610 aa).

A GIY-YIG domain is found at 13–92 (TLPGVYLMKN…IKQHKPRYNA (80 aa)). The UVR domain maps to 204-239 (KDVLKDLYEEMRLLSEQLEFEKANHLLRTIRYIEKT).

This sequence belongs to the UvrC family. As to quaternary structure, interacts with UvrB in an incision complex.

The protein resides in the cytoplasm. The UvrABC repair system catalyzes the recognition and processing of DNA lesions. UvrC both incises the 5' and 3' sides of the lesion. The N-terminal half is responsible for the 3' incision and the C-terminal half is responsible for the 5' incision. This chain is UvrABC system protein C, found in Protochlamydia amoebophila (strain UWE25).